Consider the following 380-residue polypeptide: Ribosomal RNA large subunit methyltransferase G (380 aa).

This sequence belongs to the methyltransferase superfamily. RlmG family.

It localises to the cytoplasm. The enzyme catalyses guanosine(1835) in 23S rRNA + S-adenosyl-L-methionine = N(2)-methylguanosine(1835) in 23S rRNA + S-adenosyl-L-homocysteine + H(+). Specifically methylates the guanine in position 1835 (m2G1835) of 23S rRNA. The protein is Ribosomal RNA large subunit methyltransferase G of Streptomyces avermitilis (strain ATCC 31267 / DSM 46492 / JCM 5070 / NBRC 14893 / NCIMB 12804 / NRRL 8165 / MA-4680).